The primary structure comprises 469 residues: Glutamate--tRNA ligase (469 aa).

A 'HIGH' region motif is present at residues Pro-11–Asn-21. The short motif at Lys-243–Arg-247 is the 'KMSKS' region element. ATP is bound at residue Lys-246.

Belongs to the class-I aminoacyl-tRNA synthetase family. Glutamate--tRNA ligase type 1 subfamily. In terms of assembly, monomer.

The protein resides in the cytoplasm. It carries out the reaction tRNA(Glu) + L-glutamate + ATP = L-glutamyl-tRNA(Glu) + AMP + diphosphate. Catalyzes the attachment of glutamate to tRNA(Glu) in a two-step reaction: glutamate is first activated by ATP to form Glu-AMP and then transferred to the acceptor end of tRNA(Glu). The chain is Glutamate--tRNA ligase from Burkholderia lata (strain ATCC 17760 / DSM 23089 / LMG 22485 / NCIMB 9086 / R18194 / 383).